The primary structure comprises 197 residues: Adrenodoxin-like protein 1, mitochondrial (197 aa).

The transit peptide at 1–35 directs the protein to the mitochondrion; that stretch reads MIGHRISRLGSTIVKQLAREGYLATYGTKNLHRSY. A 2Fe-2S ferredoxin-type domain is found at 79–184; it reads EKITIIFVDK…GVRLAIPSAT (106 aa). Residues cysteine 118, cysteine 124, cysteine 127, and cysteine 165 each coordinate [2Fe-2S] cluster.

This sequence belongs to the adrenodoxin/putidaredoxin family. The cofactor is [2Fe-2S] cluster.

Its subcellular location is the mitochondrion matrix. Functionally, associates in vitro with the adrenodoxin reductase MFDR to form an efficient low potential electron transfer chain that is able to reduce cytochrome C. Functions as accessory mitochondrial protein involved with BIO2 in the plant biotin synthase reaction. The polypeptide is Adrenodoxin-like protein 1, mitochondrial (Arabidopsis thaliana (Mouse-ear cress)).